The following is a 280-amino-acid chain: C-type lectin domain family 1 member A (280 aa).

The tract at residues 1-44 (MQAKYSSTRDMLDDDGDTTMSLHSQGSATTRHPEPRRTEHRAPS) is disordered. Residues 1–52 (MQAKYSSTRDMLDDDGDTTMSLHSQGSATTRHPEPRRTEHRAPSSTWRPVAL) lie on the Cytoplasmic side of the membrane. Over residues 18-30 (TTMSLHSQGSATT) the composition is skewed to polar residues. Positions 31–42 (RHPEPRRTEHRA) are enriched in basic and acidic residues. A helical; Signal-anchor for type II membrane protein membrane pass occupies residues 53 to 73 (TLLTLCLVLLIGLAALGLLFF). Over 74–280 (QYYQLSNTGQ…VPPETLGEGD (207 aa)) the chain is Extracellular. Residues asparagine 95 and asparagine 169 are each glycosylated (N-linked (GlcNAc...) asparagine). Residues 144–258 (HGDNCYQFYK…CKELKRCVCE (115 aa)) enclose the C-type lectin domain. Intrachain disulfides connect cysteine 165–cysteine 257 and cysteine 236–cysteine 249.

In terms of tissue distribution, expressed preferentially in dendritic cells.

The protein resides in the membrane. In Homo sapiens (Human), this protein is C-type lectin domain family 1 member A (CLEC1A).